A 130-amino-acid polypeptide reads, in one-letter code: Capsid protein (130 aa).

Positions 32–105 (EWISSNSRSQ…FATNSDCELI (74 aa)) are viral RNA-binding.

Belongs to the Leviviricetes capsid protein family. Homodimer. The capsid proteins form dimers that assemble by group of 5. Twelve such pentamers are linked together with free dimers. The homodimers binds to the viral RNA via an operator hairpin, but also to many other RNA sequences in the viral genome; this interaction probably shifts the virus from the replicative to the assembly phase and ensures specific encapsidation of the viral genome.

Its subcellular location is the virion. In terms of biological role, capsid protein self-assembles to form an icosahedral capsid with a T=3 symmetry, about 26 nm in diameter, and consisting of 89 capsid proteins dimers (178 capsid proteins). Involved in viral genome encapsidation through the interaction between a capsid protein dimer and the multiple packaging signals present in the RNA genome. The capsid also contains 1 copy of the A2 maturation protein. Acts as a translational repressor of viral replicase synthesis late in infection. This latter function is the result of capsid protein interaction with an RNA hairpin which contains the replicase ribosome-binding site. The sequence is that of Capsid protein from Enterobacteria phage ZR (Bacteriophage ZR).